An 828-amino-acid polypeptide reads, in one-letter code: DNA topoisomerase 3 (828 aa).

The 146-residue stretch at 4-149 (RILNVAEKPS…KFEFYRAHFS (146 aa)) folds into the Toprim domain. The region spanning 167–617 (NEKDSIAVDT…STIEKYKQLY (451 aa)) is the Topo IA-type catalytic domain. Tyr361 (O-(5'-phospho-DNA)-tyrosine intermediate) is an active-site residue. A disordered region spans residues 763 to 828 (QQQQQQQQQQ…SDRNNNNFIF (66 aa)).

Belongs to the type IA topoisomerase family.

It catalyses the reaction ATP-independent breakage of single-stranded DNA, followed by passage and rejoining.. Releases the supercoiling and torsional tension of DNA introduced during the DNA replication and transcription by transiently cleaving and rejoining one strand of the DNA duplex. Introduces a single-strand break via transesterification at a target site in duplex DNA. The scissile phosphodiester is attacked by the catalytic tyrosine of the enzyme, resulting in the formation of a DNA-(5'-phosphotyrosyl)-enzyme intermediate and the expulsion of a 3'-OH DNA strand. The free DNA strand than undergoes passage around the unbroken strand thus removing DNA supercoils. Finally, in the religation step, the DNA 3'-OH attacks the covalent intermediate to expel the active-site tyrosine and restore the DNA phosphodiester backbone. The sequence is that of DNA topoisomerase 3 (top3) from Dictyostelium discoideum (Social amoeba).